The following is a 138-amino-acid chain: Basic phospholipase A2 PL-X' (138 aa).

Residues Met-1–Gly-16 form the signal peptide. 7 disulfide bridges follow: Cys-42/Cys-131, Cys-44/Cys-60, Cys-59/Cys-111, Cys-65/Cys-138, Cys-66/Cys-104, Cys-73/Cys-97, and Cys-91/Cys-102. The Ca(2+) site is built by Tyr-43, Gly-45, and Gly-47. His-63 is a catalytic residue. Asp-64 provides a ligand contact to Ca(2+). Asp-105 is a catalytic residue.

Belongs to the phospholipase A2 family. Group II subfamily. D49 sub-subfamily. The cofactor is Ca(2+). Expressed by the venom gland.

It localises to the secreted. It catalyses the reaction a 1,2-diacyl-sn-glycero-3-phosphocholine + H2O = a 1-acyl-sn-glycero-3-phosphocholine + a fatty acid + H(+). PLA2 catalyzes the calcium-dependent hydrolysis of the 2-acyl groups in 3-sn-phosphoglycerides. The polypeptide is Basic phospholipase A2 PL-X' (Protobothrops flavoviridis (Habu)).